We begin with the raw amino-acid sequence, 254 residues long: 2,3-bisphosphoglycerate-dependent phosphoglycerate mutase (254 aa).

Residues R15 to N22, T28 to G29, R67, E94 to Y97, K105, R121 to R122, and G188 to N189 each bind substrate. Catalysis depends on H16, which acts as the Tele-phosphohistidine intermediate. E94 functions as the Proton donor/acceptor in the catalytic mechanism.

It belongs to the phosphoglycerate mutase family. BPG-dependent PGAM subfamily.

The catalysed reaction is (2R)-2-phosphoglycerate = (2R)-3-phosphoglycerate. Its pathway is carbohydrate degradation; glycolysis; pyruvate from D-glyceraldehyde 3-phosphate: step 3/5. Its function is as follows. Catalyzes the interconversion of 2-phosphoglycerate and 3-phosphoglycerate. The chain is 2,3-bisphosphoglycerate-dependent phosphoglycerate mutase from Corynebacterium jeikeium (strain K411).